A 457-amino-acid polypeptide reads, in one-letter code: Phosphomethylpyrimidine synthase (457 aa).

Substrate is bound by residues N80, M109, Y139, H175, 195–197, 236–239, and E275; these read SRG and DSLR. Zn(2+) is bound at residue H279. Y302 contacts substrate. H343 is a Zn(2+) binding site. [4Fe-4S] cluster is bound by residues C423, C426, and C431.

Belongs to the ThiC family. The cofactor is [4Fe-4S] cluster.

The catalysed reaction is 5-amino-1-(5-phospho-beta-D-ribosyl)imidazole + S-adenosyl-L-methionine = 4-amino-2-methyl-5-(phosphooxymethyl)pyrimidine + CO + 5'-deoxyadenosine + formate + L-methionine + 3 H(+). It functions in the pathway cofactor biosynthesis; thiamine diphosphate biosynthesis. Catalyzes the synthesis of the hydroxymethylpyrimidine phosphate (HMP-P) moiety of thiamine from aminoimidazole ribotide (AIR) in a radical S-adenosyl-L-methionine (SAM)-dependent reaction. In Nostoc sp. (strain PCC 7120 / SAG 25.82 / UTEX 2576), this protein is Phosphomethylpyrimidine synthase.